A 186-amino-acid polypeptide reads, in one-letter code: ATP synthase subunit delta (186 aa).

It belongs to the ATPase delta chain family. F-type ATPases have 2 components, F(1) - the catalytic core - and F(0) - the membrane proton channel. F(1) has five subunits: alpha(3), beta(3), gamma(1), delta(1), epsilon(1). F(0) has three main subunits: a(1), b(2) and c(10-14). The alpha and beta chains form an alternating ring which encloses part of the gamma chain. F(1) is attached to F(0) by a central stalk formed by the gamma and epsilon chains, while a peripheral stalk is formed by the delta and b chains.

The protein resides in the cell inner membrane. Functionally, f(1)F(0) ATP synthase produces ATP from ADP in the presence of a proton or sodium gradient. F-type ATPases consist of two structural domains, F(1) containing the extramembraneous catalytic core and F(0) containing the membrane proton channel, linked together by a central stalk and a peripheral stalk. During catalysis, ATP synthesis in the catalytic domain of F(1) is coupled via a rotary mechanism of the central stalk subunits to proton translocation. Its function is as follows. This protein is part of the stalk that links CF(0) to CF(1). It either transmits conformational changes from CF(0) to CF(1) or is implicated in proton conduction. The polypeptide is ATP synthase subunit delta (Ruegeria sp. (strain TM1040) (Silicibacter sp.)).